We begin with the raw amino-acid sequence, 456 residues long: Amino acid transporter AVT6B (456 aa).

11 helical membrane-spanning segments follow: residues 37 to 57 (FSGA…MALP), 58 to 78 (ATMK…MAFL), 118 to 138 (ILVS…DVLA), 164 to 184 (TFVL…FKRI), 191 to 211 (SAIS…ITII), 236 to 256 (LFTV…VHSI), 273 to 293 (ALAM…LLFG), 328 to 348 (LMLV…GLIF), 365 to 385 (SITA…PSIW), 388 to 408 (FQFT…AAVI), and 423 to 443 (IAIC…YSDA).

This sequence belongs to the amino acid/polyamine transporter 2 family. Amino acid/auxin permease (AAAP) (TC 2.A.18.6) subfamily.

It localises to the membrane. The sequence is that of Amino acid transporter AVT6B from Arabidopsis thaliana (Mouse-ear cress).